Reading from the N-terminus, the 216-residue chain is Large ribosomal subunit protein uL24m (216 aa).

A mitochondrion-targeting transit peptide spans 1-9 (MRLSALLAL). Ser-24 carries the post-translational modification Phosphoserine. One can recognise a KOW domain in the interval 56 to 89 (LFCGDMVEILEGKDAGKQGKVVQVVRQRNWVVLE).

It belongs to the universal ribosomal protein uL24 family. Component of the mitochondrial ribosome large subunit (39S) which comprises a 16S rRNA and about 50 distinct proteins.

It is found in the mitochondrion. This Mus musculus (Mouse) protein is Large ribosomal subunit protein uL24m (Mrpl24).